A 71-amino-acid chain; its full sequence is UPF0337 protein RPA4418 (71 aa).

The disordered stretch occupies residues 1–54 (MGSTMDKIKGQANELAGKAKQGIGEATGSDKLKGEGAIQEAKGHGQQALGNAKD).

This sequence belongs to the UPF0337 (CsbD) family.

This Rhodopseudomonas palustris (strain ATCC BAA-98 / CGA009) protein is UPF0337 protein RPA4418.